We begin with the raw amino-acid sequence, 199 residues long: MLTRPREIYLATAVSIGILLSLIAPLGPPLARADGTSQLAELVDAAAERLEVADPVAAFKWRAQLPIEDSGRVEQQLAKLGEDARSQHIDPDYVTRVFDDQIRATEAIEYSRFSDWKLNPASAPPEPPDLSASRSAIDSLNNRMLSQIWSHWSLLSAPSCAAQLDRAKRDIVRSRHLDSLYQRALTTATQSYCQALPPA.

The first 33 residues, 1 to 33, serve as a signal peptide directing secretion; that stretch reads MLTRPREIYLATAVSIGILLSLIAPLGPPLARA. Positions 34–113 constitute a Chorismate mutase domain; sequence DGTSQLAELV…ATEAIEYSRF (80 aa). Substrate contacts are provided by residues R49, K60, D69, 72–76, 105–109, and R134; these read RVEQQ and TEAIE. C160 and C193 form a disulfide bridge.

As to quaternary structure, homodimer.

The protein localises to the secreted. It catalyses the reaction chorismate = prephenate. It participates in metabolic intermediate biosynthesis; prephenate biosynthesis; prephenate from chorismate: step 1/1. Its activity is regulated as follows. Tyrosine, phenylalanine, and tryptophan moderately enhance chorismate mutase activity at low concentrations, but allosterically inhibit the enzyme at higher concentrations. Its function is as follows. Catalyzes the Claisen rearrangement of chorismate to prephenate. May play some role in the pathogenicity. This Mycobacterium tuberculosis (strain ATCC 25618 / H37Rv) protein is Secreted chorismate mutase.